Here is a 166-residue protein sequence, read N- to C-terminus: Glutamyl-tRNA(Gln) amidotransferase subunit C, mitochondrial (166 aa).

The transit peptide at 1-44 (MIRGWTIFTLCKPSALVGSSHFNKQFNWAKSQLQFATKVPQQPY) directs the protein to the mitochondrion.

The protein belongs to the GatC family. As to quaternary structure, subunit of the heterotrimeric GatCAB amidotransferase (AdT) complex, composed of A, B and C subunits.

Its subcellular location is the mitochondrion. The catalysed reaction is L-glutamyl-tRNA(Gln) + L-glutamine + ATP + H2O = L-glutaminyl-tRNA(Gln) + L-glutamate + ADP + phosphate + H(+). Functionally, allows the formation of correctly charged Gln-tRNA(Gln) through the transamidation of misacylated Glu-tRNA(Gln) in the mitochondria. The reaction takes place in the presence of glutamine and ATP through an activated gamma-phospho-Glu-tRNA(Gln). The sequence is that of Glutamyl-tRNA(Gln) amidotransferase subunit C, mitochondrial from Anopheles darlingi (Mosquito).